A 78-amino-acid chain; its full sequence is Large ribosomal subunit protein bL28 (78 aa).

A disordered region spans residues 1 to 23; that stretch reads MSRVCQVTGKRPMVGNNRSHAKN.

The protein belongs to the bacterial ribosomal protein bL28 family.

This chain is Large ribosomal subunit protein bL28, found in Shewanella pealeana (strain ATCC 700345 / ANG-SQ1).